The primary structure comprises 439 residues: ATP-dependent protease ATPase subunit HslU (439 aa).

ATP-binding positions include I17, 59–64 (GVGKTE), D251, E317, and R389.

The protein belongs to the ClpX chaperone family. HslU subfamily. As to quaternary structure, a double ring-shaped homohexamer of HslV is capped on each side by a ring-shaped HslU homohexamer. The assembly of the HslU/HslV complex is dependent on binding of ATP.

Its subcellular location is the cytoplasm. Functionally, ATPase subunit of a proteasome-like degradation complex; this subunit has chaperone activity. The binding of ATP and its subsequent hydrolysis by HslU are essential for unfolding of protein substrates subsequently hydrolyzed by HslV. HslU recognizes the N-terminal part of its protein substrates and unfolds these before they are guided to HslV for hydrolysis. This Campylobacter jejuni (strain RM1221) protein is ATP-dependent protease ATPase subunit HslU.